We begin with the raw amino-acid sequence, 220 residues long: uncharacterized protein (220 aa).

The next 7 helical transmembrane spans lie at 6–26 (FSIL…LIVW), 33–53 (IVRL…LRGI), 59–79 (ALIA…PWLL), 103–123 (LLIT…VVNL), 126–146 (GVTI…LFVM), 157–177 (AGFL…TAGV), and 179–199 (LIVE…IGVL).

The protein resides in the cell membrane. This is an uncharacterized protein from Mycobacterium tuberculosis (strain ATCC 25618 / H37Rv).